Here is a 348-residue protein sequence, read N- to C-terminus: MADIYRFPKFSYEDNGTVEPLPLRTGPDKKAIPHIRIVKVGDPPKHGVRYLDLLLLGFFETPKQTASLGSVSDLTEHTGYSICGSGSLPIGVAKYHGSDQELLKACTDLRITVRRTVRAGEMIVYMVDSIGAPLLPWSGRLRQGMIFNANKVALAPQCLPVDKDIRFRVVFVNGTSLGAITIAKIPKTLADLALPNSISVNLLVTLKTGISTEQKGVLPVLDDQGEKKLNFMVHLGLIRRKVGKIYSVEYCKSKIERMRLIFSLGLIGGISFHVQVTGTLSKTFMGQLAWKRAVCFPLMDVNPHMNLVIWAASVEITDVDAVFQPAIPRDFRYYPNVVAKNIGRIRKL.

The YLDL motif signature appears at 50–53; sequence YLDL. Ser70 bears the Phosphoserine; by host mark.

The protein belongs to the morbillivirus/respirovirus/rubulavirus M protein family. Homomultimer. Binds to the cytoplasmic regions of F and HN proteins. Interacts with nucleocapsid. Interacts with human alpha-tubulin and beta-tubulin. Interacts with host ANP32B. Post-translationally, a large portion is phosphorylated in the cytoplasm, but not in virion. However, this phosphorylation is not essential for virus replication.

Its subcellular location is the virion. The protein resides in the host cytoplasm. The protein localises to the host cell membrane. Functionally, plays a crucial role in virion assembly and budding. Forms a shell at the inner face of the plasma membrane and concentrates the HN and F glycoproteins. Acts as a negative regulator for transcription and replication by sticking to the nucleocapsid. This effect might be regulated by the cytoplasmic interaction with tubulin that dissociates the M protein from the nucleocapsid. This chain is Matrix protein (M), found in Sendai virus (strain Ohita) (SeV).